The chain runs to 263 residues: uncharacterized protein (263 aa).

The ABC transporter domain maps to 12-247; sequence LETQNLAIGY…ENLAKIYRTS (236 aa). 44–51 is an ATP binding site; that stretch reads GANGAGKS.

The protein belongs to the ABC transporter superfamily.

This is an uncharacterized protein from Haemophilus influenzae (strain ATCC 51907 / DSM 11121 / KW20 / Rd).